We begin with the raw amino-acid sequence, 161 residues long: Regulator of ribonuclease activity A (161 aa).

Belongs to the RraA family. As to quaternary structure, homotrimer. Binds to both RNA-binding sites in the C-terminal region of Rne and to RhlB.

It localises to the cytoplasm. Globally modulates RNA abundance by binding to RNase E (Rne) and regulating its endonucleolytic activity. Can modulate Rne action in a substrate-dependent manner by altering the composition of the degradosome. Modulates RNA-binding and helicase activities of the degradosome. The protein is Regulator of ribonuclease activity A of Shigella flexneri serotype 5b (strain 8401).